Consider the following 312-residue polypeptide: MIVEVFFRNFYRNFAKFEIDAVDKREFAFQPFSGGMVRHKSFKSLEDLRKFVVEKTPRHIYHSAAYYERPGEEDMERKGWIGADLIFDIDGDHLDTEACRESKIVSLRCLEDAREEANKLIDVLIQELDLKPTRIVFSGNRGFHIHVSSEEVMKLGSRERRELVNYLKAVGFDPSRFIAKLGRRKVVLYEEEAVGNLLRIKQGVEDARAMKVEIDEVVTQDIHRLIRAPGSLNGKTGLVALPISLKELDKGVEYIVDKAIAFRKGHLKFKFEKPVEGPVLFEKVGGREGDVKVLPAYVAIYLELQEFGKIYD.

Catalysis depends on residues D88, D90, and D215.

The protein belongs to the eukaryotic-type primase small subunit family. As to quaternary structure, heterodimer of a small subunit (PriS) and a large subunit (PriL). Mg(2+) is required as a cofactor. The cofactor is Mn(2+).

Catalytic subunit of DNA primase, an RNA polymerase that catalyzes the synthesis of short RNA molecules used as primers for DNA polymerase during DNA replication. The small subunit contains the primase catalytic core and has DNA synthesis activity on its own. Binding to the large subunit stabilizes and modulates the activity, increasing the rate of DNA synthesis while decreasing the length of the DNA fragments, and conferring RNA synthesis capability. The DNA polymerase activity may enable DNA primase to also catalyze primer extension after primer synthesis. May also play a role in DNA repair. This is DNA primase small subunit PriS from Pyrobaculum aerophilum (strain ATCC 51768 / DSM 7523 / JCM 9630 / CIP 104966 / NBRC 100827 / IM2).